The following is a 78-amino-acid chain: uncharacterized protein (78 aa).

This protein may be involved in virus assembly. Essential for virus function. This is an uncharacterized protein from Sulfolobus spindle-shape virus 1 (SSV1).